Consider the following 114-residue polypeptide: Hydrogenase maturation factor HypA (114 aa).

Residue His-2 participates in Ni(2+) binding. Residues Cys-73, Cys-76, Cys-89, and Cys-92 each contribute to the Zn(2+) site.

Belongs to the HypA/HybF family.

Its function is as follows. Involved in the maturation of [NiFe] hydrogenases. Required for nickel insertion into the metal center of the hydrogenase. In Azoarcus sp. (strain BH72), this protein is Hydrogenase maturation factor HypA.